The primary structure comprises 527 residues: Sulfate adenylyltransferase (527 aa).

Residues 1-176 form an N-terminal region; it reads MPIPTPHGGK…LQGINYPKHY (176 aa). The tract at residues 177–406 is catalytic; the sequence is DYVDARKTPT…LRETNPPRSK (230 aa). Gln-206 contacts sulfate. Residues 206–209 and 302–305 each bind ATP; these read QTRN and GRDH. Active-site residues include Thr-207, Arg-208, and Asn-209. Arg-208 serves as a coordination point for sulfate. Ala-306 contacts sulfate. Val-344 is a binding site for ATP. The tract at residues 407–527 is required for oligomerization; adenylyl-sulfate kinase-like; that stretch reads QGFAILIDNS…VNYLKDQGFY (121 aa).

Belongs to the sulfate adenylyltransferase family. Homohexamer. Dimer of trimers.

The protein resides in the cytoplasm. It catalyses the reaction sulfate + ATP + H(+) = adenosine 5'-phosphosulfate + diphosphate. It participates in sulfur metabolism; hydrogen sulfide biosynthesis; sulfite from sulfate: step 1/3. Functionally, catalyzes the first intracellular reaction of sulfate assimilation, forming adenosine-5'-phosphosulfate (APS) from inorganic sulfate and ATP. Plays an important role in sulfate activation as a component of the biosynthesis pathway of sulfur-containing amino acids. This Candida albicans (strain SC5314 / ATCC MYA-2876) (Yeast) protein is Sulfate adenylyltransferase.